The sequence spans 352 residues: Ion-translocating oxidoreductase complex subunit D (352 aa).

A run of 4 helical transmembrane segments spans residues 20–40 (IMLL…WFFG), 42–62 (GTLV…ALVL), 89–109 (IPPL…VIIA), and 123–143 (PAMI…TSWL). At Thr-187 the chain carries FMN phosphoryl threonine. The next 5 membrane-spanning stretches (helical) occupy residues 214–234 (ILAG…GVWL), 242–262 (WHIP…GWLF), 267–287 (LAAP…FFIL), 301–321 (LIFG…GGYP), and 322–342 (DGVA…DYYT).

This sequence belongs to the NqrB/RnfD family. In terms of assembly, the complex is composed of six subunits: RsxA, RsxB, RsxC, RsxD, RsxE and RsxG. FMN serves as cofactor.

The protein resides in the cell inner membrane. Its function is as follows. Part of a membrane-bound complex that couples electron transfer with translocation of ions across the membrane. Required to maintain the reduced state of SoxR. This chain is Ion-translocating oxidoreductase complex subunit D, found in Escherichia coli O81 (strain ED1a).